The chain runs to 146 residues: ATP synthase epsilon chain (146 aa).

Belongs to the ATPase epsilon chain family. In terms of assembly, F-type ATPases have 2 components, CF(1) - the catalytic core - and CF(0) - the membrane proton channel. CF(1) has five subunits: alpha(3), beta(3), gamma(1), delta(1), epsilon(1). CF(0) has three main subunits: a, b and c.

It localises to the cell membrane. Produces ATP from ADP in the presence of a proton gradient across the membrane. The sequence is that of ATP synthase epsilon chain from Lactobacillus delbrueckii subsp. bulgaricus (strain ATCC 11842 / DSM 20081 / BCRC 10696 / JCM 1002 / NBRC 13953 / NCIMB 11778 / NCTC 12712 / WDCM 00102 / Lb 14).